The sequence spans 289 residues: Protease HtpX (289 aa).

Helical transmembrane passes span 5–25 (IVLF…VMSL) and 33–53 (MSGL…ISLL). His140 provides a ligand contact to Zn(2+). The active site involves Glu141. Residue His144 participates in Zn(2+) binding. 2 helical membrane passes run 155–175 (LLQG…GGFI) and 193–213 (GIVL…TMWF). Position 218 (Glu218) interacts with Zn(2+).

This sequence belongs to the peptidase M48B family. Zn(2+) serves as cofactor.

The protein localises to the cell inner membrane. This chain is Protease HtpX, found in Xylella fastidiosa (strain M12).